We begin with the raw amino-acid sequence, 487 residues long: 1-hydroxycarotenoid 3,4-desaturase (487 aa).

Residues G12, E31, K39, 55-56, V247, N275, L431, G461, and 468-469 each bind FAD; these read SL and GI.

It belongs to the carotenoid/retinoid oxidoreductase family. As to quaternary structure, monomer.

It catalyses the reaction rhodopin + A = (3E)-3,4-didehydrorhodopin + AH2. The enzyme catalyses 1'-hydroxy-gamma-carotene + A = 1'-hydroxytorulene + AH2. The catalysed reaction is 1-hydroxy-all-trans-1,2-dihydro-neurosporene + A = demethylspheroidene + AH2. It carries out the reaction 1,1'-dihydroxy-1,1',2,2'-tetrahydroneurosporene + A = 1'-hydroxy-demethylspheroidene + AH2. It catalyses the reaction 1,1'-dihydroxy-1,1',2,2'-tetrahydrolycopene + A = 1,1'-dihydroxy-3,4-didehydro-1,2-dihydrolycopene + AH2. It functions in the pathway carotenoid biosynthesis. In terms of biological role, catalyzes the introduction of a C-3,4 double bond into 1'-hydroxy-gamma-carotene and rhodopin (1-hydroxylycopene) to yield 1'-hydroxytorulene and (3E)-3,4-didehydrorhodopin, respectively. Can also use 1-hydroxy-all-trans-1,2-dihydro-neurosporene, 1,1'-dihydroxy-1,1',2,2'-tetrahydroneurosporene and 1,1'-dihydroxy-1,1',2,2'-tetrahydrolycopene. Probably involved in the synthesis of myxol, a gamma-carotene derivative. May use FAD as a proton acceptor. In Nonlabens dokdonensis (strain DSM 17205 / KCTC 12402 / DSW-6) (Donghaeana dokdonensis), this protein is 1-hydroxycarotenoid 3,4-desaturase.